We begin with the raw amino-acid sequence, 237 residues long: Early nodulin-like protein 1 (237 aa).

The first 28 residues, 1-28, serve as a signal peptide directing secretion; it reads MEASRRWPYAAWFMAVLGLVAVFSSSEA. One can recognise a Phytocyanin domain in the interval 29-134; the sequence is YVFYAGGRDG…GQKLYIIVMA (106 aa). N59 carries an N-linked (GlcNAc...) asparagine glycan. A disulfide bridge connects residues C85 and C122. Positions 139-215 are disordered; the sequence is KPSEAPEPAG…SLGAPPPTSG (77 aa). Low complexity-rich tracts occupy residues 140–152 and 201–215; these read PSEAPEPAGAAGP and MSRSSSLGAPPPTSG. Residue S206 is the site of GPI-anchor amidated serine attachment. Positions 207–237 are cleaved as a propeptide — removed in mature form; that stretch reads LGAPPPTSGAAGLAGVVASVVVGVLGALLMF.

The protein belongs to the early nodulin-like (ENODL) family. Expressed ubiquitously. Accumulates particularly in reproductive tissues, especially in maturing seeds.

It is found in the vacuole. The protein localises to the aleurone grain membrane. May act as a carbohydrate transporter. The sequence is that of Early nodulin-like protein 1 from Oryza sativa subsp. japonica (Rice).